The following is a 445-amino-acid chain: Phosphoglucosamine mutase (445 aa).

S102 acts as the Phosphoserine intermediate in catalysis. 4 residues coordinate Mg(2+): S102, D241, D243, and D245. Phosphoserine is present on S102.

It belongs to the phosphohexose mutase family. Mg(2+) serves as cofactor. Activated by phosphorylation.

It catalyses the reaction alpha-D-glucosamine 1-phosphate = D-glucosamine 6-phosphate. Catalyzes the conversion of glucosamine-6-phosphate to glucosamine-1-phosphate. The sequence is that of Phosphoglucosamine mutase from Zymomonas mobilis subsp. mobilis (strain ATCC 31821 / ZM4 / CP4).